We begin with the raw amino-acid sequence, 164 residues long: Respiratory growth induced protein 2 (164 aa).

This sequence belongs to the RGI1 family.

It localises to the cytoplasm. In terms of biological role, involved in the control of energetic metabolism and significantly contribute to cell fitness, especially under respiratory growth conditions. The polypeptide is Respiratory growth induced protein 2 (RGI2) (Candida glabrata (strain ATCC 2001 / BCRC 20586 / JCM 3761 / NBRC 0622 / NRRL Y-65 / CBS 138) (Yeast)).